The chain runs to 197 residues: Dephospho-CoA kinase (197 aa).

The region spanning 3 to 197 is the DPCK domain; that stretch reads ILGLTGSIAM…TGCLVGQGSR (195 aa). 11-16 provides a ligand contact to ATP; the sequence is AMGKST.

This sequence belongs to the CoaE family.

Its subcellular location is the cytoplasm. It catalyses the reaction 3'-dephospho-CoA + ATP = ADP + CoA + H(+). The protein operates within cofactor biosynthesis; coenzyme A biosynthesis; CoA from (R)-pantothenate: step 5/5. Functionally, catalyzes the phosphorylation of the 3'-hydroxyl group of dephosphocoenzyme A to form coenzyme A. The protein is Dephospho-CoA kinase of Zymomonas mobilis subsp. mobilis (strain ATCC 31821 / ZM4 / CP4).